The primary structure comprises 323 residues: Nucleotide-binding protein ZMO1325 (323 aa).

ATP is bound at residue 25 to 32 (GLSGAGKS). Residue 78 to 81 (DSRT) participates in GTP binding.

Belongs to the RapZ-like family.

Displays ATPase and GTPase activities. The protein is Nucleotide-binding protein ZMO1325 of Zymomonas mobilis subsp. mobilis (strain ATCC 31821 / ZM4 / CP4).